A 339-amino-acid polypeptide reads, in one-letter code: Lipoate-protein ligase A (339 aa).

Positions 28 to 211 (NPDSHTLFLW…AFREYYRDTD (184 aa)) constitute a BPL/LPL catalytic domain. Residues Arg-70, 75 to 78 (GAVF), and Lys-129 each bind ATP. Residue Lys-129 coordinates (R)-lipoate.

Belongs to the LplA family. Monomer.

It is found in the cytoplasm. The enzyme catalyses L-lysyl-[lipoyl-carrier protein] + (R)-lipoate + ATP = N(6)-[(R)-lipoyl]-L-lysyl-[lipoyl-carrier protein] + AMP + diphosphate + H(+). It participates in protein modification; protein lipoylation via exogenous pathway; protein N(6)-(lipoyl)lysine from lipoate: step 1/2. The protein operates within protein modification; protein lipoylation via exogenous pathway; protein N(6)-(lipoyl)lysine from lipoate: step 2/2. Functionally, catalyzes both the ATP-dependent activation of exogenously supplied lipoate to lipoyl-AMP and the transfer of the activated lipoyl onto the lipoyl domains of lipoate-dependent enzymes. The chain is Lipoate-protein ligase A from Psychrobacter cryohalolentis (strain ATCC BAA-1226 / DSM 17306 / VKM B-2378 / K5).